Consider the following 28-residue polypeptide: Endoglucanase (28 aa).

Glu-20 functions as the Nucleophile in the catalytic mechanism.

The protein belongs to the glycosyl hydrolase 5 (cellulase A) family.

The protein resides in the cell membrane. The catalysed reaction is Endohydrolysis of (1-&gt;4)-beta-D-glucosidic linkages in cellulose, lichenin and cereal beta-D-glucans.. This chain is Endoglucanase, found in Schizophyllum commune (Split gill fungus).